The sequence spans 378 residues: Protein RecA (378 aa).

79–86 provides a ligand contact to ATP; the sequence is GPESSGKT.

This sequence belongs to the RecA family.

Its subcellular location is the cytoplasm. In terms of biological role, can catalyze the hydrolysis of ATP in the presence of single-stranded DNA, the ATP-dependent uptake of single-stranded DNA by duplex DNA, and the ATP-dependent hybridization of homologous single-stranded DNAs. It interacts with LexA causing its activation and leading to its autocatalytic cleavage. The protein is Protein RecA of Streptococcus equi subsp. zooepidemicus (strain MGCS10565).